We begin with the raw amino-acid sequence, 432 residues long: MGNNVVVLGTQWGDEGKGKIVDLLTEDAKYVVRYQGGHNAGHTLVIDGQKTVLHLIPSGILRNNVKCIIGNGVVLSPEALIKEMSGLEDRGVPVRERLFISEACPLILPYHVALDQAREAARGKKAIGTTGRGIGPAYEDKVARRGLRVGDLFDMASFAEKLQEVMAFHNFQLEHFYKVEPVSYEAVLEQAKGYAELLTSMVIDVTNELDAARKRGDKIMFEGAQGTLLDIDHGTYPYVTSSNTTAGGVAAGSGFGPRHLGYILGIAKAYCTRVGAGPFPTELFDEVGDHLGTKGHEFGATTGRKRRCGWFDAVAMRRAIQINSVTGFCLTKLDVLDGLKEIKICTGYQMPDGSIAEVSPMAADAFENVTPIFETMPGWSETTFGAKTLAELPQTALDYIKRIEELTGVPVDIISTGPDRNETIIKVHPFSA.

Residues 13-19 (GDEGKGK) and 41-43 (GHT) each bind GTP. D14 functions as the Proton acceptor in the catalytic mechanism. Positions 14 and 41 each coordinate Mg(2+). IMP-binding positions include 14-17 (DEGK), 39-42 (NAGH), T130, R144, Q225, T240, and R304. Residue H42 is the Proton donor of the active site. 300 to 306 (ATTGRKR) is a substrate binding site. Residues R306, 332–334 (KLD), and 415–417 (STG) each bind GTP.

The protein belongs to the adenylosuccinate synthetase family. In terms of assembly, homodimer. It depends on Mg(2+) as a cofactor.

The protein resides in the cytoplasm. It catalyses the reaction IMP + L-aspartate + GTP = N(6)-(1,2-dicarboxyethyl)-AMP + GDP + phosphate + 2 H(+). The protein operates within purine metabolism; AMP biosynthesis via de novo pathway; AMP from IMP: step 1/2. In terms of biological role, plays an important role in the de novo pathway of purine nucleotide biosynthesis. Catalyzes the first committed step in the biosynthesis of AMP from IMP. The chain is Adenylosuccinate synthetase from Vibrio cholerae serotype O1 (strain M66-2).